Here is a 1453-residue protein sequence, read N- to C-terminus: NRPS-like tryptophan epimerase fscC (1453 aa).

Positions 37-433 (SYGELSAMSS…ATHLIRNCVV (397 aa)) are adenylation. The region spanning 544–626 (TGSRQSTRHK…LFHTSKSRFT (83 aa)) is the Carrier domain. O-(pantetheine 4'-phosphoryl)serine is present on serine 586. The segment at 639–1053 (FPLSPVQRFF…KDVLESAGVF (415 aa)) is epimerization (E) domain. The condensation stretch occupies residues 1181–1391 (FFGLQSNERA…AGSSLHQHNQ (211 aa)).

The protein belongs to the NRP synthetase family. Requires pantetheine 4'-phosphate as cofactor.

The protein operates within secondary metabolite biosynthesis. Functionally, NRPS-like tryptophan epimerase; part of the fragmented gene cluster that mediates the biosynthesis of fusarochromene, a tryptophan-derived metabolite closely related to a group of mycotoxins including fusarochromanone. Within the pathway, fscC catalyzes the first step via epimerization of L-tryptophan to provide the intermediate D-tryptophan. D-tryptophan is subsequently hydroxylated by the tryptophan 6-hydroxylase fscE to yield 6-hydroxytryptophan. The pyrrole ring undergoes cleavaged by the tryptophan 2,3-dioxygenase fscD and is finally converted to 4-hydroxykyrunenine by the hydrolase fscH. The NRPS-like oxidoreductase fscA reduces the carboxyl group to primary alcohol and the DMATS-type prenyltransferase fscG performs prenylation, followed by the formation of a chromene ring catalyzed by the oxidoreductase fscI, which leads to desacetylfusarochromene. Epoxidation by fscF and rearrangement reactions of chromene double bonds convert compound desacetylfusarochromene to fusarochromanones. Although specific acetyltransferases were not found near the fsc gene cluster, several predicted enzymes containing the N-acetyltransferase superfamily domain are present in the genome of F.equiseti. These predicted enzymes may have the potential to convert desacetylfusarochromene to fusarochromene. This Fusarium equiseti (Fusarium scirpi) protein is NRPS-like tryptophan epimerase fscC.